The sequence spans 91 residues: Probable Fe(2+)-trafficking protein (91 aa).

The protein belongs to the Fe(2+)-trafficking protein family.

In terms of biological role, could be a mediator in iron transactions between iron acquisition and iron-requiring processes, such as synthesis and/or repair of Fe-S clusters in biosynthetic enzymes. The sequence is that of Probable Fe(2+)-trafficking protein from Shewanella denitrificans (strain OS217 / ATCC BAA-1090 / DSM 15013).